A 470-amino-acid polypeptide reads, in one-letter code: Poly(A) polymerase catalytic subunit (470 aa).

Active-site residues include Asp-192 and Asp-194.

Belongs to the poxviridae poly(A) polymerase catalytic subunit family. Heterodimer of a large (catalytic) subunit and a small (regulatory) subunit.

The catalysed reaction is RNA(n) + ATP = RNA(n)-3'-adenine ribonucleotide + diphosphate. Its function is as follows. Polymerase that creates the 3'-poly(A) tail of mRNA's. The protein is Poly(A) polymerase catalytic subunit (PAPL) of Sus scrofa (Pig).